The following is a 363-amino-acid chain: MYHIDVFRIPCHSPGDTSGLEDLIETGRVAPADIVAVMGKTEGNGCVNDYTREYATAMLAACLGRHLQLPPHEVEKRVAFVMSGGTEGVLSPHHTVFARRPAIDAHRPAGKRLTLGIAFTRDFLPEEIGRHAQITETAGAVKRAMRDAGIASIDDLHFVQVKCPLLTPAKIASARSRGCAPVTTDTYESMGYSRGASALGIALATEEVPSSMLVDESVLNDWSLSSSLASASAGIELEHNVVIAIGMSEQATSELVIAHGVMSDAIDAASVRRTIESLGIRSDDEMDRIVNVFAKAEASPDGVVRGMRHTMLSDSDINSTRHARAVTGAAIASVVGHGMVYVSGGAEHQGPAGGGPFAVIARA.

Residues 1-104 (MYHIDVFRIP…TVFARRPAID (104 aa)) form an RU A region. Substrate is bound by residues Arg52 and 83-84 (SG). Positions 112–249 (RLTLGIAFTR…NVVIAIGMSE (138 aa)) are RU B. The active site involves Lys162. Substrate is bound by residues Arg194 and 232 to 233 (SA). Ser232 (nucleophile) is an active-site residue. Positions 255-363 (LVIAHGVMSD…GGPFAVIARA (109 aa)) are RU C. Glu297 contacts Mg(2+). Residues Arg324 and 343–344 (SG) contribute to the substrate site. Residues Ala346, Gln349, Gly350, Pro351, and Gly354 each contribute to the Mg(2+) site.

It belongs to the cyclic amide hydrolase (CyAH) family. Homotetramer.

It catalyses the reaction cyanurate + H2O = 1-carboxybiuret + H(+). The protein operates within xenobiotic degradation; atrazine degradation; biuret from cyanurate: step 1/1. With respect to regulation, inhibited by barbituric acid. Responsible for the hydrolysis of cyanuric acid, an intermediate formed during catabolism of s-triazine based compounds in herbicides such as atrazine and polymers such as melamine. Catalyzes the hydrolytic opening of the s-triazine ring of cyanuric acid (2,4,6-trihydroxy-s-triazine) to yield carbon dioxide and carboxybiuret, which spontaneously decarboxylates to biuret. This chain is Cyanuric acid amidohydrolase (atzD), found in Pseudomonas sp. (strain ADP).